Here is a 451-residue protein sequence, read N- to C-terminus: Phosphoglucosamine mutase (451 aa).

The Phosphoserine intermediate role is filled by Ser-107. Mg(2+)-binding residues include Ser-107, Asp-246, Asp-248, and Asp-250. Ser-107 bears the Phosphoserine mark.

This sequence belongs to the phosphohexose mutase family. Mg(2+) is required as a cofactor. In terms of processing, activated by phosphorylation.

The enzyme catalyses alpha-D-glucosamine 1-phosphate = D-glucosamine 6-phosphate. Its function is as follows. Catalyzes the conversion of glucosamine-6-phosphate to glucosamine-1-phosphate. The protein is Phosphoglucosamine mutase of Burkholderia vietnamiensis (strain G4 / LMG 22486) (Burkholderia cepacia (strain R1808)).